Reading from the N-terminus, the 122-residue chain is Large ribosomal subunit protein uL14 (122 aa).

The protein belongs to the universal ribosomal protein uL14 family. Part of the 50S ribosomal subunit. Forms a cluster with proteins L3 and L19. In the 70S ribosome, L14 and L19 interact and together make contacts with the 16S rRNA in bridges B5 and B8.

In terms of biological role, binds to 23S rRNA. Forms part of two intersubunit bridges in the 70S ribosome. This chain is Large ribosomal subunit protein uL14, found in Desulfovibrio desulfuricans (strain ATCC 27774 / DSM 6949 / MB).